The chain runs to 322 residues: Sideroflexin fsf1 (322 aa).

4 consecutive transmembrane segments (helical) span residues 143–163, 175–195, 229–249, and 269–289; these read SYIY…KIVP, VLGR…NVFL, TALS…LVLM, and LGLI…VFPA.

It belongs to the sideroflexin family.

The protein localises to the mitochondrion membrane. Its function is as follows. Mitochondrial amino-acid transporter that mediates transport of serine into mitochondria. The chain is Sideroflexin fsf1 from Schizosaccharomyces pombe (strain 972 / ATCC 24843) (Fission yeast).